A 544-amino-acid polypeptide reads, in one-letter code: Zinc finger and SCAN domain-containing protein 25 (544 aa).

Glycyl lysine isopeptide (Lys-Gly) (interchain with G-Cter in SUMO2) cross-links involve residues Lys3 and Lys22. The region spanning 42–124 is the SCAN box domain; the sequence is RLRFRQFRYQ…AMVEDLTERA (83 aa). Lys128 is covalently cross-linked (Glycyl lysine isopeptide (Lys-Gly) (interchain with G-Cter in SUMO2)). The tract at residues 157 to 189 is disordered; it reads VEVKPEWGMPPGEGVQGPDPGTEEQLSQDPGDE. Glycyl lysine isopeptide (Lys-Gly) (interchain with G-Cter in SUMO2) cross-links involve residues Lys278 and Lys285. C2H2-type zinc fingers lie at residues 348–370, 375–397, 403–425, 431–453, 459–480, and 486–508; these read FQCP…QRTH, YGCV…QRTH, YVCS…QRSH, YKCG…RRTH, YTCE…RRAH, and YGCQ…QRIH. The C2H2-type 7; degenerate zinc finger occupies 514–536; sequence YHCPACGRSFNQRSILNRHQKTQ.

It belongs to the krueppel C2H2-type zinc-finger protein family.

The protein localises to the nucleus. Functionally, may be involved in transcriptional regulation. This Homo sapiens (Human) protein is Zinc finger and SCAN domain-containing protein 25 (ZSCAN25).